The following is an 800-amino-acid chain: Calmodulin-sensitive adenylate cyclase (800 aa).

The N-terminal stretch at 1–33 (MTRNKFIPNKFSIISFSVLLFAISSSQAIEVNA) is a signal peptide. The region spanning 60–273 (KDSINNLVKT…MFEYMNKLEK (214 aa)) is the ATLF-like domain. Positions 294-349 (DVLKGEKALKASGLVPEHADAFKKIARELNTYILFRPVNKLATNLIKSGVATKGLN) are catalytic CA1. The interval 350–489 (VHGKSSDWGP…NVEGVLKPLT (140 aa)) is catalytic CB. His351 acts as the Proton acceptor in catalysis. Residues 490-622 (ADYDLFALAP…RFIEKNITGK (133 aa)) are catalytic CA2. Mg(2+) is bound by residues Asp491 and Asp493. 3',5'-cyclic AMP is bound by residues Thr548 and 577–579 (HGT). His577 provides a ligand contact to Mg(2+). Residues 623–800 (DYLYYFNRSY…EVFQKIIDEK (178 aa)) are interaction with calmodulin.

Belongs to the adenylyl cyclase class-2 family. Interacts (via ATLF domain) with the cleaved form of protective antigen (PA-63) anthrax toxin; interaction is required for EF translocation into the host cytoplasm. The cofactor is Ca(2+).

Its subcellular location is the secreted. It is found in the host cytoplasm. It localises to the host cytosol. It carries out the reaction ATP = 3',5'-cyclic AMP + diphosphate. Its activity is regulated as follows. Host calmodulin is an absolute requirement for its activation. Inhibited by ethyl 5-aminopyrazolo[1,5-a]quinazoline-3-carboxylate. Edema factor (EF), which constitutes one of the three proteins composing the anthrax toxin, causes edema in the host. Acts as a calmodulin-dependent adenylyl cyclase by converting ATP to cAMP, leading to dramatic elevation of intracellular cAMP levels in the host, thereby causing edema. EF is not toxic by itself and only acts as an edema factor when associated with protective antigen (PA) to form the edema toxin (EdTx). Required for the survival of germinated spores within macrophages at the early stages of infection. This is Calmodulin-sensitive adenylate cyclase (cya) from Bacillus anthracis.